We begin with the raw amino-acid sequence, 446 residues long: D(1A) dopamine receptor (446 aa).

Residues 1 to 23 (MRTLNTSAMDGTGLVVERDFSVR) are Extracellular-facing. N-linked (GlcNAc...) asparagine glycosylation occurs at asparagine 5. The chain crosses the membrane as a helical span at residues 24-49 (ILTACFLSLLILSTLLGNTLVCAAVI). The Cytoplasmic segment spans residues 50-60 (RFRHLRSKVTN). A helical membrane pass occupies residues 61–87 (FFVISLAVSDLLVAVLVMPWKAVAEIA). Residues 88–96 (GFWPFGSFC) are Extracellular-facing. Cysteine 96 and cysteine 186 are disulfide-bonded. The helical transmembrane segment at 97-119 (NIWVAFDIMCSTASILNLCVISV) threads the bilayer. Topologically, residues 120-138 (DRYWAISSPFRYERKMTPK) are cytoplasmic. A helical transmembrane segment spans residues 139-163 (AAFILISVAWTLSVLISFIPVQLSW). The Extracellular segment spans residues 164 to 192 (HKAKPTSPSDGNATSLAETIDNCDSSLSR). An N-linked (GlcNAc...) asparagine glycan is attached at asparagine 175. Residues 193–218 (TYAISSSVISFYIPVAIMIVTYTRIY) traverse the membrane as a helical segment. Residues 219–272 (RIAQKQIRRIAALERAAVHAKNCQTTTGNGKPVECSQPESSFKMSFKRETKVLK) are Cytoplasmic-facing. A helical transmembrane segment spans residues 273-299 (TLSVIMGVFVCCWLPFFILNCILPFCG). Residues 300–312 (SGETQPFCIDSIT) lie on the Extracellular side of the membrane. A helical transmembrane segment spans residues 313-337 (FDVFVWFGWANSSLNPIIYAFNADF). The Cytoplasmic segment spans residues 338-446 (RKAFSTLLGC…PITQNGQHPT (109 aa)). Residues cysteine 347 and cysteine 351 are each lipidated (S-palmitoyl cysteine).

It belongs to the G-protein coupled receptor 1 family. Interacts with DNAJC14 via its C-terminus. Interacts with DRD2. Interacts with DORIP1.

The protein localises to the cell membrane. Its subcellular location is the endoplasmic reticulum membrane. The protein resides in the cell projection. It localises to the cilium membrane. It is found in the dendrite. The protein localises to the dendritic spine. In terms of biological role, dopamine receptor whose activity is mediated by G proteins which activate adenylyl cyclase. The polypeptide is D(1A) dopamine receptor (DRD1) (Macaca mulatta (Rhesus macaque)).